The sequence spans 89 residues: Large ribosomal subunit protein bL27 (89 aa).

Belongs to the bacterial ribosomal protein bL27 family.

This Afipia carboxidovorans (strain ATCC 49405 / DSM 1227 / KCTC 32145 / OM5) (Oligotropha carboxidovorans) protein is Large ribosomal subunit protein bL27.